Here is a 257-residue protein sequence, read N- to C-terminus: Putative carboxymethylenebutenolidase (257 aa).

Catalysis depends on residues C148, D195, and H226.

Belongs to the dienelactone hydrolase family.

The enzyme catalyses 2-(5-oxo-2,5-dihydrofuran-2-ylidene)acetate + H2O = 4-oxohex-2-enedioate + H(+). The protein is Putative carboxymethylenebutenolidase of Saccharolobus solfataricus (strain ATCC 35092 / DSM 1617 / JCM 11322 / P2) (Sulfolobus solfataricus).